Reading from the N-terminus, the 667-residue chain is Probable E3 ubiquitin ligase complex SCF subunit sconB (667 aa).

Residues 1–55 (MNGSGSTAKESLFNPTPRKLGLPEDNTMTPYNGVRSIFDNSSGSRQLTDEHTNQE) are disordered. Residues 182–228 (IDFITALPPEISFKILSYLDTASLCRAAQVSRAWKCLADDDVVWHRM) enclose the F-box domain. 7 WD repeats span residues 347–386 (GHTN…RTLT), 388–426 (HTSG…STYT), 428–464 (HLGG…TFLL), 466–507 (GHSD…RTFQ), 549–593 (RQEP…CLRT), 594–633 (FFGH…CERT), and 636–667 (GHSG…SFKN). The segment at 528-562 (DHDAGHEEDSNASVSGDESPLRQEPCSPGASFFEG) is disordered.

The protein belongs to the WD repeat MET30/SCONB/SCON-2 family. In terms of assembly, component of the SCF(sconB) E3 ubiquitin ligase complex.

It functions in the pathway protein modification; protein ubiquitination. Component of the SCF(sconB) E3 ubiquitin ligase complex involved in the regulation of sulfur metabolite repression, probably by mediating the inactivation or degradation of the metR transcription factor. This is Probable E3 ubiquitin ligase complex SCF subunit sconB (sconB) from Talaromyces stipitatus (strain ATCC 10500 / CBS 375.48 / QM 6759 / NRRL 1006) (Penicillium stipitatum).